The sequence spans 600 residues: Ligand-dependent nuclear receptor corepressor-like protein (600 aa).

Disordered stretches follow at residues 1 to 24 (MEKGTDRMAAAAPAPPAAASQCRS), 102 to 122 (SVIGSSQSTPTEELSSQGQSN), and 495 to 519 (DGTSENTEDSLDRKDNKQPRKKRGR). Polar residues predominate over residues 104–122 (IGSSQSTPTEELSSQGQSN). Residues 514-566 (RKKRGRYRQYDHEIMEEAIAMVMSGKMSVSKAQGIYGVPHSTLEYKVKERSGT) enclose the HTH psq-type domain. The segment at residues 542-562 (VSKAQGIYGVPHSTLEYKVKE) is a DNA-binding region (H-T-H motif). A disordered region spans residues 581–600 (GLFNMTDSGTGSCKTSSKPV). Over residues 583 to 600 (FNMTDSGTGSCKTSSKPV) the composition is skewed to polar residues.

Its subcellular location is the nucleus. May act as transcription activator that binds DNA elements with the sequence 5'-CCCTATCGATCGATCTCTACCT-3'. In Gallus gallus (Chicken), this protein is Ligand-dependent nuclear receptor corepressor-like protein (LCORL).